The chain runs to 123 residues: Protein Wnt-7 (123 aa).

Serine 1 carries the O-palmitoleoyl serine; by PORCN lipid modification. A disulfide bridge links cysteine 89 with cysteine 104. An N-linked (GlcNAc...) asparagine glycan is attached at asparagine 90.

The protein belongs to the Wnt family. Palmitoleoylation is required for efficient binding to frizzled receptors. Depalmitoleoylation leads to Wnt signaling pathway inhibition.

Its subcellular location is the secreted. It is found in the extracellular space. It localises to the extracellular matrix. Functionally, ligand for members of the frizzled family of seven transmembrane receptors. Probable developmental protein. May be a signaling molecule which affects the development of discrete regions of tissues. Is likely to signal over only few cell diameters. This is Protein Wnt-7 (WNT-7) from Evasterias troschelii (Mottled sea star).